The following is a 225-amino-acid chain: Large ribosomal subunit protein bL25 (225 aa).

Residues 188 to 225 form a disordered region; sequence EEIEEAEAEAQATDADTATDDSEQTSEEQAEENKEDKE. The segment covering 204–217 has biased composition (acidic residues); it reads TATDDSEQTSEEQA.

Belongs to the bacterial ribosomal protein bL25 family. CTC subfamily. As to quaternary structure, part of the 50S ribosomal subunit; part of the 5S rRNA/L5/L18/L25 subcomplex. Contacts the 5S rRNA. Binds to the 5S rRNA independently of L5 and L18.

Its function is as follows. This is one of the proteins that binds to the 5S RNA in the ribosome where it forms part of the central protuberance. The protein is Large ribosomal subunit protein bL25 of Exiguobacterium sibiricum (strain DSM 17290 / CCUG 55495 / CIP 109462 / JCM 13490 / 255-15).